An 83-amino-acid chain; its full sequence is Acyl carrier protein (83 aa).

Residues Ser-2–His-77 enclose the Carrier domain. Ser-37 is subject to O-(pantetheine 4'-phosphoryl)serine.

Belongs to the acyl carrier protein (ACP) family. 4'-phosphopantetheine is transferred from CoA to a specific serine of apo-ACP by AcpS. This modification is essential for activity because fatty acids are bound in thioester linkage to the sulfhydryl of the prosthetic group.

It is found in the cytoplasm. It participates in lipid metabolism; fatty acid biosynthesis. Carrier of the growing fatty acid chain in fatty acid biosynthesis. The protein is Acyl carrier protein of Blochmanniella pennsylvanica (strain BPEN).